We begin with the raw amino-acid sequence, 78 residues long: D-alanyl carrier protein (78 aa).

Residues 1–78 (MDFKQEVLDV…NIVNQLSELK (78 aa)) form the Carrier domain. The residue at position 36 (serine 36) is an O-(pantetheine 4'-phosphoryl)serine.

It belongs to the DltC family. 4'-phosphopantetheine is transferred from CoA to a specific serine of apo-DCP.

It is found in the cytoplasm. It participates in cell wall biogenesis; lipoteichoic acid biosynthesis. Its function is as follows. Carrier protein involved in the D-alanylation of lipoteichoic acid (LTA). The loading of thioester-linked D-alanine onto DltC is catalyzed by D-alanine--D-alanyl carrier protein ligase DltA. The DltC-carried D-alanyl group is further transferred to cell membrane phosphatidylglycerol (PG) by forming an ester bond, probably catalyzed by DltD. D-alanylation of LTA plays an important role in modulating the properties of the cell wall in Gram-positive bacteria, influencing the net charge of the cell wall. In Bacillus subtilis (strain 168), this protein is D-alanyl carrier protein.